We begin with the raw amino-acid sequence, 220 residues long: Vesicle-associated membrane protein 7 (220 aa).

Residue alanine 2 is modified to N-acetylalanine. Topologically, residues 2-188 are cytoplasmic; that stretch reads AILFAVVARG…ARAMCMKNLK (187 aa). Residues 7 to 110 form the Longin domain; the sequence is VVARGTTILA…AMNSEFSSVL (104 aa). The v-SNARE coiled-coil homology domain occupies 125 to 185; that stretch reads KVMETQAQVD…RNLARAMCMK (61 aa). Phosphoserine occurs at positions 167 and 168. The helical; Anchor for type IV membrane protein transmembrane segment at 189-209 threads the bilayer; the sequence is LTIIIIIVSIVFIYIIVSPLC. The Vesicular segment spans residues 210 to 220; that stretch reads GGFTWPSCVKK.

This sequence belongs to the synaptobrevin family. As to quaternary structure, component of the SNARE complex composed of STX4, SNAP23 and VAMP7 that binds SYT7 during lysosomal exocytosis. Component of the SNARE complex composed of STX7, STX8, VAMP7 and VTI1B that is required for heterotypic fusion of late endosomes with lysosomes in liver cells. May interact with STX17. Interacts with PICALM. Interacts with RAB21.

It localises to the cytoplasmic vesicle. It is found in the secretory vesicle membrane. The protein localises to the golgi apparatus. Its subcellular location is the trans-Golgi network membrane. The protein resides in the late endosome membrane. It localises to the lysosome membrane. It is found in the endoplasmic reticulum membrane. The protein localises to the phagosome membrane. Its subcellular location is the synapse. The protein resides in the synaptosome. Functionally, involved in the targeting and/or fusion of transport vesicles to their target membrane during transport of proteins from the early endosome to the lysosome. Required for heterotypic fusion of late endosomes with lysosomes and homotypic lysosomal fusion. Required for calcium regulated lysosomal exocytosis. Involved in the export of chylomicrons from the endoplasmic reticulum to the cis Golgi. Required for exocytosis of mediators during eosinophil and neutrophil degranulation, and target cell killing by natural killer cells. Required for focal exocytosis of late endocytic vesicles during phagosome formation. This is Vesicle-associated membrane protein 7 (VAMP7) from Pongo abelii (Sumatran orangutan).